We begin with the raw amino-acid sequence, 316 residues long: Beta-ketoacyl-[acyl-carrier-protein] synthase III (316 aa).

Residues cysteine 112 and histidine 243 contribute to the active site. Residues 244-248 form an ACP-binding region; that stretch reads QANLR. Asparagine 273 is a catalytic residue.

It belongs to the thiolase-like superfamily. FabH family. In terms of assembly, homodimer.

It is found in the cytoplasm. It catalyses the reaction malonyl-[ACP] + acetyl-CoA + H(+) = 3-oxobutanoyl-[ACP] + CO2 + CoA. It functions in the pathway lipid metabolism; fatty acid biosynthesis. Catalyzes the condensation reaction of fatty acid synthesis by the addition to an acyl acceptor of two carbons from malonyl-ACP. Catalyzes the first condensation reaction which initiates fatty acid synthesis and may therefore play a role in governing the total rate of fatty acid production. Possesses both acetoacetyl-ACP synthase and acetyl transacylase activities. Its substrate specificity determines the biosynthesis of branched-chain and/or straight-chain of fatty acids. The polypeptide is Beta-ketoacyl-[acyl-carrier-protein] synthase III (Haemophilus influenzae (strain 86-028NP)).